The sequence spans 98 residues: MPYIYMNITLAFVISLIGTLMYRSHLMSSLLCLEGMMLSLFTLNALLSLNMNFTLSTTVPLILLVFAACEAAVGLALLIMISNTYGLDYVQNLNLLQC.

A run of 3 helical transmembrane segments spans residues 1 to 21, 29 to 49, and 61 to 81; these read MPYIYMNITLAFVISLIGTLM, SLLCLEGMMLSLFTLNALLSL, and LILLVFAACEAAVGLALLIMI.

This sequence belongs to the complex I subunit 4L family. In terms of assembly, core subunit of respiratory chain NADH dehydrogenase (Complex I) which is composed of 45 different subunits.

The protein localises to the mitochondrion inner membrane. It catalyses the reaction a ubiquinone + NADH + 5 H(+)(in) = a ubiquinol + NAD(+) + 4 H(+)(out). Its function is as follows. Core subunit of the mitochondrial membrane respiratory chain NADH dehydrogenase (Complex I) which catalyzes electron transfer from NADH through the respiratory chain, using ubiquinone as an electron acceptor. Part of the enzyme membrane arm which is embedded in the lipid bilayer and involved in proton translocation. The chain is NADH-ubiquinone oxidoreductase chain 4L (MT-ND4L) from Mammuthus primigenius (Siberian woolly mammoth).